A 450-amino-acid polypeptide reads, in one-letter code: UPF0210 protein MK1214 (450 aa).

This sequence belongs to the UPF0210 family.

The polypeptide is UPF0210 protein MK1214 (Methanopyrus kandleri (strain AV19 / DSM 6324 / JCM 9639 / NBRC 100938)).